Consider the following 184-residue polypeptide: MINAINLPISLNNGPPAGGFGLNTNIFEINIINLGIVIGLLVYLGEGVLTNLLVNRKQTILSTIRDAEERYREATDKLKQARARLQQAKVKAGEIRSNGLARMEREKQDLINAADEDSKRLEESKNSTIRFEEQRAIEQVRQQVSRLALERVLESLKSRFNSELHSRMIDYHIDLIKSMEGTTD.

Residues 29–49 traverse the membrane as a helical segment; the sequence is INIINLGIVIGLLVYLGEGVL.

It belongs to the ATPase B chain family. In terms of assembly, F-type ATPases have 2 components, F(1) - the catalytic core - and F(0) - the membrane proton channel. F(1) has five subunits: alpha(3), beta(3), gamma(1), delta(1), epsilon(1). F(0) has four main subunits: a(1), b(1), b'(1) and c(10-14). The alpha and beta chains form an alternating ring which encloses part of the gamma chain. F(1) is attached to F(0) by a central stalk formed by the gamma and epsilon chains, while a peripheral stalk is formed by the delta, b and b' chains.

It is found in the plastid. The protein resides in the chloroplast thylakoid membrane. Its function is as follows. F(1)F(0) ATP synthase produces ATP from ADP in the presence of a proton or sodium gradient. F-type ATPases consist of two structural domains, F(1) containing the extramembraneous catalytic core and F(0) containing the membrane proton channel, linked together by a central stalk and a peripheral stalk. During catalysis, ATP synthesis in the catalytic domain of F(1) is coupled via a rotary mechanism of the central stalk subunits to proton translocation. Functionally, component of the F(0) channel, it forms part of the peripheral stalk, linking F(1) to F(0). This chain is ATP synthase subunit b, chloroplastic, found in Psilotum nudum (Whisk fern).